We begin with the raw amino-acid sequence, 346 residues long: Biotin synthase (346 aa).

One can recognise a Radical SAM core domain in the interval 38–256 (QQVQVSTLLS…IAVARIMMPT (219 aa)). 3 residues coordinate [4Fe-4S] cluster: cysteine 53, cysteine 57, and cysteine 60. [2Fe-2S] cluster contacts are provided by cysteine 97, cysteine 128, cysteine 188, and arginine 260.

The protein belongs to the radical SAM superfamily. Biotin synthase family. In terms of assembly, homodimer. The cofactor is [4Fe-4S] cluster. Requires [2Fe-2S] cluster as cofactor.

The catalysed reaction is (4R,5S)-dethiobiotin + (sulfur carrier)-SH + 2 reduced [2Fe-2S]-[ferredoxin] + 2 S-adenosyl-L-methionine = (sulfur carrier)-H + biotin + 2 5'-deoxyadenosine + 2 L-methionine + 2 oxidized [2Fe-2S]-[ferredoxin]. It functions in the pathway cofactor biosynthesis; biotin biosynthesis; biotin from 7,8-diaminononanoate: step 2/2. In terms of biological role, catalyzes the conversion of dethiobiotin (DTB) to biotin by the insertion of a sulfur atom into dethiobiotin via a radical-based mechanism. This Salmonella choleraesuis (strain SC-B67) protein is Biotin synthase.